The sequence spans 476 residues: Glycogen synthase (476 aa).

Residue lysine 15 participates in ADP-alpha-D-glucose binding.

This sequence belongs to the glycosyltransferase 1 family. Bacterial/plant glycogen synthase subfamily.

It carries out the reaction [(1-&gt;4)-alpha-D-glucosyl](n) + ADP-alpha-D-glucose = [(1-&gt;4)-alpha-D-glucosyl](n+1) + ADP + H(+). Its pathway is glycan biosynthesis; glycogen biosynthesis. Functionally, synthesizes alpha-1,4-glucan chains using ADP-glucose. This Ligilactobacillus salivarius (strain UCC118) (Lactobacillus salivarius) protein is Glycogen synthase.